A 532-amino-acid chain; its full sequence is Bifunctional purine biosynthesis protein PurH (532 aa).

The MGS-like domain occupies 1–148 (MQTPKPIKRA…KNHKDVTIVV (148 aa)).

Belongs to the PurH family.

It carries out the reaction (6R)-10-formyltetrahydrofolate + 5-amino-1-(5-phospho-beta-D-ribosyl)imidazole-4-carboxamide = 5-formamido-1-(5-phospho-D-ribosyl)imidazole-4-carboxamide + (6S)-5,6,7,8-tetrahydrofolate. The enzyme catalyses IMP + H2O = 5-formamido-1-(5-phospho-D-ribosyl)imidazole-4-carboxamide. It functions in the pathway purine metabolism; IMP biosynthesis via de novo pathway; 5-formamido-1-(5-phospho-D-ribosyl)imidazole-4-carboxamide from 5-amino-1-(5-phospho-D-ribosyl)imidazole-4-carboxamide (10-formyl THF route): step 1/1. It participates in purine metabolism; IMP biosynthesis via de novo pathway; IMP from 5-formamido-1-(5-phospho-D-ribosyl)imidazole-4-carboxamide: step 1/1. The polypeptide is Bifunctional purine biosynthesis protein PurH (Alteromonas mediterranea (strain DSM 17117 / CIP 110805 / LMG 28347 / Deep ecotype)).